A 223-amino-acid chain; its full sequence is UPF0758 protein HD_0732 (223 aa).

Residues 98-220 enclose the MPN domain; that stretch reads TINTPHLAIM…YFSFEEERFH (123 aa). Zn(2+)-binding residues include histidine 169, histidine 171, and aspartate 182. The short motif at 169–182 is the JAMM motif element; sequence HNHPSGNCTASQAD.

It belongs to the UPF0758 family.

The protein is UPF0758 protein HD_0732 of Haemophilus ducreyi (strain 35000HP / ATCC 700724).